The following is a 235-amino-acid chain: Casparian strip membrane protein 2 (235 aa).

The segment at 1-46 (MSGSDTSGSVHVDEHGHGKASSSYDGAGAPAPAPAPFQGHRKAGSG) is disordered. The Cytoplasmic segment spans residues 1–67 (MSGSDTSGSV…GSGGDGLRRC (67 aa)). Residues 68 to 88 (LGLIDFVLRVAAFGPTLAAAI) form a helical membrane-spanning segment. Over 89 to 115 (SIGTSDERLSVFTNYFQFRARFDDFPA) the chain is Extracellular. A helical membrane pass occupies residues 116-136 (FEFFIVANAIAAGYMVLSLPF). Residues 137 to 150 (SAATIMSSKATGVK) are Cytoplasmic-facing. The chain crosses the membrane as a helical span at residues 151–171 (LLLLICDTIMVGLLTAAASAA). Topologically, residues 172–203 (AAMVYVAHEGNLRANWVPICLQFHGFCQRTSG) are extracellular. The chain crosses the membrane as a helical span at residues 204 to 224 (AVIASFLAVFVLMVLIVMAAF). Residues 225–235 (TMPRRTHHTAS) are Cytoplasmic-facing.

This sequence belongs to the Casparian strip membrane proteins (CASP) family. In terms of assembly, homodimer and heterodimers.

The protein localises to the cell membrane. In terms of biological role, regulates membrane-cell wall junctions and localized cell wall deposition. Required for establishment of the Casparian strip membrane domain (CSD) and the subsequent formation of Casparian strips, a cell wall modification of the root endodermis that determines an apoplastic barrier between the intraorganismal apoplasm and the extraorganismal apoplasm and prevents lateral diffusion. The chain is Casparian strip membrane protein 2 from Oryza sativa subsp. indica (Rice).